The sequence spans 546 residues: Chaperonin GroEL (546 aa).

ATP is bound by residues Thr-30–Pro-33, Lys-51, Asp-87–Thr-91, Gly-415, Asn-479–Ala-481, and Asp-495.

The protein belongs to the chaperonin (HSP60) family. In terms of assembly, forms a cylinder of 14 subunits composed of two heptameric rings stacked back-to-back. Interacts with the co-chaperonin GroES.

The protein resides in the cytoplasm. It carries out the reaction ATP + H2O + a folded polypeptide = ADP + phosphate + an unfolded polypeptide.. Functionally, together with its co-chaperonin GroES, plays an essential role in assisting protein folding. The GroEL-GroES system forms a nano-cage that allows encapsulation of the non-native substrate proteins and provides a physical environment optimized to promote and accelerate protein folding. The protein is Chaperonin GroEL of Bordetella avium (strain 197N).